A 239-amino-acid polypeptide reads, in one-letter code: Pyridoxal 5'-phosphate synthase subunit PdxS (239 aa).

Position 21 (Asp21) interacts with D-ribose 5-phosphate. Lys78 (schiff-base intermediate with D-ribose 5-phosphate) is an active-site residue. A D-ribose 5-phosphate-binding site is contributed by Gly150. Arg162 serves as a coordination point for D-glyceraldehyde 3-phosphate. D-ribose 5-phosphate is bound by residues Gly211 and 232–233 (GS).

This sequence belongs to the PdxS/SNZ family. In terms of assembly, in the presence of PdxT, forms a dodecamer of heterodimers.

It catalyses the reaction aldehydo-D-ribose 5-phosphate + D-glyceraldehyde 3-phosphate + L-glutamine = pyridoxal 5'-phosphate + L-glutamate + phosphate + 3 H2O + H(+). It participates in cofactor biosynthesis; pyridoxal 5'-phosphate biosynthesis. Its function is as follows. Catalyzes the formation of pyridoxal 5'-phosphate from ribose 5-phosphate (RBP), glyceraldehyde 3-phosphate (G3P) and ammonia. The ammonia is provided by the PdxT subunit. Can also use ribulose 5-phosphate and dihydroxyacetone phosphate as substrates, resulting from enzyme-catalyzed isomerization of RBP and G3P, respectively. The chain is Pyridoxal 5'-phosphate synthase subunit PdxS from Francisella tularensis.